The following is a 315-amino-acid chain: Three-prime repair exonuclease 1 (315 aa).

The Mg(2+) site is built by Asp18 and Glu20. 20 to 21 (EA) serves as a coordination point for substrate. Residue Ser78 is modified to Phosphoserine. Tyr129 lines the substrate pocket. Phosphoserine is present on Ser167. His195 acts as the Proton donor/acceptor in catalysis. Position 200 (Asp200) interacts with Mg(2+). Residue Asp200 coordinates substrate. The tract at residues 236-315 (TTSTGTNPRP…YGLSLAMPGQ (80 aa)) is necessary for endoplasmic reticulum localization. Positions 243–315 (PRPSAVTATV…YGLSLAMPGQ (73 aa)) are interaction with UBQLN1. The segment at 256–282 (RASDTGPNLRGDRSPKPAPSPKMCPGA) is disordered. Residues 271 to 282 (KPAPSPKMCPGA) are compositionally biased toward pro residues. A necessary for cytoplasmic retention region spans residues 282 to 315 (APPGEGLLAPLGLLAFLTLAVAMLYGLSLAMPGQ).

Belongs to the exonuclease superfamily. TREX family. As to quaternary structure, homodimer. Interacts (via proline-rich region) with TCERG1/CA150 (via the second WW domain). Component of the SET complex, composed of at least ANP32A, APEX1, HMGB2, NME1, SET and TREX1. Within this complex, directly interacts with SET; this interaction does not result in TREX1 inhibition. Also interacts with NME1, but only following translocation to the nucleus. Directly interacts with UBQLN1 (via ubiquitin-like domain); the interaction may control TREX1 subcellular location. Mg(2+) is required as a cofactor. In terms of processing, ubiquitinated, but not targeted to proteasomal degradation. Ubiquitination may be important for interaction with UBQLN1.

The protein localises to the nucleus. Its subcellular location is the cytoplasm. It is found in the cytosol. It localises to the endoplasmic reticulum membrane. It catalyses the reaction Exonucleolytic cleavage in the 3'- to 5'-direction to yield nucleoside 5'-phosphates.. Major cellular 3'-to-5' DNA exonuclease which digests single-stranded DNA (ssDNA) and double-stranded DNA (dsDNA) with mismatched 3' termini. Prevents cell-intrinsic initiation of autoimmunity. Acts by metabolizing DNA fragments from endogenous retroelements, including L1, LTR and SINE elements. Plays a key role in degradation of DNA fragments at cytosolic micronuclei arising from genome instability: its association with the endoplasmic reticulum membrane directs TREX1 to ruptured micronuclei, leading to micronuclear DNA degradation. Micronuclear DNA degradation is required to limit CGAS activation and subsequent inflammation. Unless degraded, these DNA fragments accumulate in the cytosol and activate the cGAS-STING innate immune signaling, leading to the production of type I interferon. Prevents chronic ATM-dependent checkpoint activation, by processing ssDNA polynucleotide species arising from the processing of aberrant DNA replication intermediates. Inefficiently degrades oxidized DNA, such as that generated upon antimicrobial reactive oxygen production or upon absorption of UV light. During GZMA-mediated cell death, contributes to DNA damage in concert with NME1. NME1 nicks one strand of DNA and TREX1 removes bases from the free 3' end to enhance DNA damage and prevent DNA end reannealing and rapid repair. The polypeptide is Three-prime repair exonuclease 1 (Bos taurus (Bovine)).